Consider the following 143-residue polypeptide: SsrA-binding protein (143 aa).

It belongs to the SmpB family.

Its subcellular location is the cytoplasm. Its function is as follows. Required for rescue of stalled ribosomes mediated by trans-translation. Binds to transfer-messenger RNA (tmRNA), required for stable association of tmRNA with ribosomes. tmRNA and SmpB together mimic tRNA shape, replacing the anticodon stem-loop with SmpB. tmRNA is encoded by the ssrA gene; the 2 termini fold to resemble tRNA(Ala) and it encodes a 'tag peptide', a short internal open reading frame. During trans-translation Ala-aminoacylated tmRNA acts like a tRNA, entering the A-site of stalled ribosomes, displacing the stalled mRNA. The ribosome then switches to translate the ORF on the tmRNA; the nascent peptide is terminated with the 'tag peptide' encoded by the tmRNA and targeted for degradation. The ribosome is freed to recommence translation, which seems to be the essential function of trans-translation. This is SsrA-binding protein from Mycoplasmopsis synoviae (strain 53) (Mycoplasma synoviae).